Consider the following 130-residue polypeptide: MPTKSFHRTDRVSAQVRRDLGTIVHAAVRDHGLPSVSVSDVEISRDLAHAKVFVTALQQERSAEAVKGLKEIAGQLRTQLARAMKLRHVPELHFHYDDSVDRGERIDNLLRDLDDVGPEATSSDEDAEQR.

The tract at residues arginine 111–arginine 130 is disordered.

Belongs to the RbfA family. In terms of assembly, monomer. Binds 30S ribosomal subunits, but not 50S ribosomal subunits or 70S ribosomes.

It is found in the cytoplasm. Functionally, one of several proteins that assist in the late maturation steps of the functional core of the 30S ribosomal subunit. Associates with free 30S ribosomal subunits (but not with 30S subunits that are part of 70S ribosomes or polysomes). Required for efficient processing of 16S rRNA. May interact with the 5'-terminal helix region of 16S rRNA. The protein is Ribosome-binding factor A of Xanthomonas euvesicatoria pv. vesicatoria (strain 85-10) (Xanthomonas campestris pv. vesicatoria).